The primary structure comprises 343 residues: Transcription factor BPE (343 aa).

The 51-residue stretch at 142 to 192 (QATDSHSLAERARREKISERMKILQDLVPGCNKVIGKALVLDEIINYIQSL) folds into the bHLH domain.

Homodimer. Specifically expressed in flowers, mostly in petals, inflorescence and flower buds. In terms of tissue distribution, expressed ubiquitously (leaves, flowers and stems).

The protein localises to the nucleus. Its function is as follows. Involved in the control of petal size, by interfering with postmitotic cell expansion to limit final petal cell size. The sequence is that of Transcription factor BPE (BPE) from Arabidopsis thaliana (Mouse-ear cress).